The chain runs to 136 residues: MNTAGPAGKLAGHAASGPTQRQLRVGEEVRRMLADLFARTEFRDPELVDVRITVTEVRISPDLKHATAFVARLGRSDVETLLPALKRVAPFLRSRLSTGLRLRGVPEIHFQPDTALDYAMEVDALLRQPDVARDLD.

Positions 1–22 (MNTAGPAGKLAGHAASGPTQRQ) are disordered.

The protein belongs to the RbfA family. Monomer. Binds 30S ribosomal subunits, but not 50S ribosomal subunits or 70S ribosomes.

The protein resides in the cytoplasm. Functionally, one of several proteins that assist in the late maturation steps of the functional core of the 30S ribosomal subunit. Associates with free 30S ribosomal subunits (but not with 30S subunits that are part of 70S ribosomes or polysomes). Required for efficient processing of 16S rRNA. May interact with the 5'-terminal helix region of 16S rRNA. The sequence is that of Ribosome-binding factor A from Gluconacetobacter diazotrophicus (strain ATCC 49037 / DSM 5601 / CCUG 37298 / CIP 103539 / LMG 7603 / PAl5).